The sequence spans 30 residues: Cyclotide cter-P (30 aa).

Positions glycine 1–asparagine 30 form a cross-link, cyclopeptide (Gly-Asn). Cystine bridges form between cysteine 4–cysteine 20, cysteine 8–cysteine 22, and cysteine 13–cysteine 27.

This is a cyclic peptide.

The protein resides in the secreted. Functionally, probably participates in a plant defense mechanism. The polypeptide is Cyclotide cter-P (Clitoria ternatea (Butterfly pea)).